The primary structure comprises 194 residues: Mediator of RNA polymerase II transcription subunit 8 (194 aa).

Belongs to the Mediator complex subunit 8 family. As to quaternary structure, component of the Mediator complex.

It localises to the nucleus. Component of the Mediator complex, a coactivator involved in the regulated transcription of nearly all RNA polymerase II-dependent genes. Mediator functions as a bridge to convey information from gene-specific regulatory proteins to the basal RNA polymerase II transcription machinery. Mediator is recruited to promoters by direct interactions with regulatory proteins and serves as a scaffold for the assembly of a functional preinitiation complex with RNA polymerase II and the general transcription factors. In Yarrowia lipolytica (strain CLIB 122 / E 150) (Yeast), this protein is Mediator of RNA polymerase II transcription subunit 8 (MED8).